Reading from the N-terminus, the 683-residue chain is Methionine--tRNA ligase (683 aa).

Residues 23–33 (PYANGSAHIGH) carry the 'HIGH' region motif. C154, C157, C166, and C170 together coordinate Zn(2+). The 'KMSKS' region signature appears at 335–339 (KFSKS). K338 is an ATP binding site. In terms of domain architecture, tRNA-binding spans 583-683 (DFAKMELRVG…KPSEPGTKVR (101 aa)).

The protein belongs to the class-I aminoacyl-tRNA synthetase family. MetG type 1 subfamily. In terms of assembly, homodimer. Zn(2+) is required as a cofactor.

Its subcellular location is the cytoplasm. The catalysed reaction is tRNA(Met) + L-methionine + ATP = L-methionyl-tRNA(Met) + AMP + diphosphate. Its function is as follows. Is required not only for elongation of protein synthesis but also for the initiation of all mRNA translation through initiator tRNA(fMet) aminoacylation. The protein is Methionine--tRNA ligase of Methanocella arvoryzae (strain DSM 22066 / NBRC 105507 / MRE50).